We begin with the raw amino-acid sequence, 294 residues long: MNFQSVIATLHQFWAERGCLIAQPYDIEKGAGTKNPHTFLRALGPEPWAVAYVEPCRRPTDGRYGENPNRVQHYYQYQVLIKPSPDNIQDIYLDSLRALGIRPEDHDIRFVEDNWEDATVGAWGTGWEVWLDGMEITQFTYFQQCGGIDCRPVSIEITYGLERLAMYLQEVEAITKIHWTDDITYGDVFLQNEIEQSTYNFEASNPELLLTLFSLYEQEATQLTEKGLVLPSLDYVMKCSHTFNLLDARGVISVTERTRYIARIRHLARKVANLYVEQREKLGFPLLKNVPVAQ.

It belongs to the class-II aminoacyl-tRNA synthetase family. As to quaternary structure, tetramer of two alpha and two beta subunits.

It is found in the cytoplasm. It carries out the reaction tRNA(Gly) + glycine + ATP = glycyl-tRNA(Gly) + AMP + diphosphate. The protein is Glycine--tRNA ligase alpha subunit of Trichormus variabilis (strain ATCC 29413 / PCC 7937) (Anabaena variabilis).